The sequence spans 345 residues: MQINLNLKEKASSYKIYINELERLELKGKVGIVTNAKVAGLHLEKLLSVLKCDEKFIISVPDGEEYKNLTTIEQILEQLFVSKFDRSSTLIALGGGVISDMTGFAASIYERGISFINIPTTLLAQVDASVGGKTGVNNKFGKNLIGSFYQPKAVFCEINFLKTLPKREFAAGMAEALKMAITFDKEMFSWLKSVNLDDENLAKLVEKSINLKARVVEQDEKEKGLRAILNYGHTFAHVIENETNYKEFLHGEAVAIGMNMANRLSVRLGLMSEAQAEEIKQVLVKFDLPVSYKIENEYAFYEAFFMDKKTKGDKINFIIADKIGSAVIKNDVKKEDVLETLREFK.

Residues Asp62 to Lys67, Gly96 to Asp100, Thr120 to Thr121, Lys133, Lys142, and Phe160 to Thr163 each bind NAD(+). Zn(2+)-binding residues include Glu175, His233, and His250.

The protein belongs to the sugar phosphate cyclases superfamily. Dehydroquinate synthase family. It depends on Co(2+) as a cofactor. Zn(2+) serves as cofactor. The cofactor is NAD(+).

Its subcellular location is the cytoplasm. It carries out the reaction 7-phospho-2-dehydro-3-deoxy-D-arabino-heptonate = 3-dehydroquinate + phosphate. It functions in the pathway metabolic intermediate biosynthesis; chorismate biosynthesis; chorismate from D-erythrose 4-phosphate and phosphoenolpyruvate: step 2/7. Functionally, catalyzes the conversion of 3-deoxy-D-arabino-heptulosonate 7-phosphate (DAHP) to dehydroquinate (DHQ). In Campylobacter concisus (strain 13826), this protein is 3-dehydroquinate synthase.